Reading from the N-terminus, the 332-residue chain is MNAEHAPFRHYLDLADARLGSQVVAVSDEWFAPASRMLQAGEPVWKEGVFDDSGKWMDGWETRRKRFEGHDQAVIRLGVPGVLKGVDIDTRFFTGNHPPAASLDGCFCAEGDPDDSTSWSEVLAAVGLQGDSHHYHPIDDERPWTHLRLNIYPDGGIARLRLYGVPYRDWSNQPPGTALDLAAAVNGGRALACSDQHFGRMGNLLNPGRAINMGDGWETGRRRTPGHDWVIVALGHPGSIEAAVVDTLHFKGNYPESCSIQAAFVEGGNEARIEAQSLFWRELLPAQKLEMHQEHRFERHLNALGPITHVRLNIFPDGGVSRLRLFGRPQLP.

Belongs to the allantoicase family.

It carries out the reaction allantoate + H2O = (S)-ureidoglycolate + urea. It functions in the pathway nitrogen metabolism; (S)-allantoin degradation; (S)-ureidoglycolate from allantoate (aminidohydrolase route): step 1/1. This Pseudomonas aeruginosa (strain LESB58) protein is Probable allantoicase.